Consider the following 788-residue polypeptide: Integrin beta-6 (788 aa).

An N-terminal signal peptide occupies residues 1–21; that stretch reads MGIELLCFFFLFLGRDDHVRG. Residues 22-71 enclose the PSI domain; sequence GCAMEGAETCGDCLLIGPQCAWCSQENFTHPSGVSERCDTPANLLAKGCQ. Topologically, residues 22 to 709 are extracellular; that stretch reads GCAMEGAETC…KDCPKPPNIP (688 aa). Cystine bridges form between Cys23–Cys41, Cys31–Cys454, Cys34–Cys59, Cys44–Cys70, Cys197–Cys204, Cys252–Cys293, Cys394–Cys406, Cys426–Cys452, Cys456–Cys476, Cys467–Cys479, Cys481–Cys490, Cys492–Cys519, Cys502–Cys517, Cys511–Cys522, Cys524–Cys537, Cys539–Cys560, Cys544–Cys558, Cys552–Cys563, and Cys565–Cys574. 2 N-linked (GlcNAc...) asparagine glycosylation sites follow: Asn48 and Asn97. Residues 131 to 371 enclose the VWFA domain; it reads YPVDLYYLMD…QLIISAYEEL (241 aa). The Mg(2+) site is built by Asp140, Ser142, and Ser144. 4 residues coordinate Ca(2+): Ser144, Asp147, Asp148, and Glu179. Ca(2+) is bound by residues Asn235, Asp237, Pro239, and Glu240. Glu240 provides a ligand contact to Mg(2+). N-linked (GlcNAc...) asparagine glycosylation occurs at Asn260. Positions 271 and 355 each coordinate Ca(2+). Residues Asn387, Asn396, and Asn418 are each glycosylated (N-linked (GlcNAc...) asparagine). I-EGF domains are found at residues 456-491, 492-538, 539-575, and 576-615; these read CQKE…PHCE, CGED…PYCQ, CDNF…EYCN, and CTTS…PTCE. Asn463 and Asn471 each carry an N-linked (GlcNAc...) asparagine glycan. Asn541 carries an N-linked (GlcNAc...) asparagine glycan. N-linked (GlcNAc...) asparagine glycosylation occurs at Asn575. 9 cysteine pairs are disulfide-bonded: Cys576–Cys599, Cys583–Cys597, Cys591–Cys602, Cys604–Cys614, Cys617–Cys620, Cys624–Cys670, Cys630–Cys649, Cys633–Cys645, and Cys678–Cys702. The N-linked (GlcNAc...) asparagine glycan is linked to Asn696. The chain crosses the membrane as a helical span at residues 710–730; the sequence is MIMLGVSLAILLIGVVLLCIW. The interaction with HAX1 stretch occupies residues 731–758; it reads KLLVSFHDRKEVAKFEAERSKAKWQTGT. Over 731–788 the chain is Cytoplasmic; that stretch reads KLLVSFHDRKEVAKFEAERSKAKWQTGTNPLYRGSTSTFKNVTYKHRDKLKTDLSTDG.

It belongs to the integrin beta chain family. As to quaternary structure, heterodimer of an alpha and a beta subunit. Interacts with FLNB. Interacts with HAX1. ITGAV:ITGB6 interacts with FBN1. ITGAV:ITGB6 interacts with TGFB1.

The protein localises to the cell membrane. The protein resides in the cell junction. Its subcellular location is the focal adhesion. Its function is as follows. Integrin alpha-V:beta-6 (ITGAV:ITGB6) is a receptor for fibronectin and cytotactin. It recognizes the sequence R-G-D in its ligands. ITGAV:ITGB6 acts as a receptor for fibrillin-1 (FBN1) and mediates R-G-D-dependent cell adhesion to FBN1. Integrin alpha-V:beta-6 (ITGAV:ITGB6) mediates R-G-D-dependent release of transforming growth factor beta-1 (TGF-beta-1) from regulatory Latency-associated peptide (LAP), thereby playing a key role in TGF-beta-1 activation. The polypeptide is Integrin beta-6 (ITGB6) (Cavia porcellus (Guinea pig)).